Consider the following 89-residue polypeptide: GTP cyclohydrolase 1 feedback regulatory protein (89 aa).

This sequence belongs to the GFRP family. As to quaternary structure, homopentamer. Forms a complex with GCH1 where a GCH1 homodecamer is sandwiched by two GFRP homopentamers.

The protein localises to the nucleus. It localises to the nucleus membrane. The protein resides in the cytoplasm. Its subcellular location is the cytosol. Functionally, mediates tetrahydrobiopterin inhibition of GTP cyclohydrolase 1. This Danio rerio (Zebrafish) protein is GTP cyclohydrolase 1 feedback regulatory protein (gchfr).